The sequence spans 542 residues: Chaperonin GroEL (542 aa).

ATP is bound by residues 29-32 (TLGP), lysine 50, 86-90 (DGTTT), glycine 413, 477-479 (NAA), and aspartate 493.

This sequence belongs to the chaperonin (HSP60) family. In terms of assembly, forms a cylinder of 14 subunits composed of two heptameric rings stacked back-to-back. Interacts with the co-chaperonin GroES.

It is found in the cytoplasm. It carries out the reaction ATP + H2O + a folded polypeptide = ADP + phosphate + an unfolded polypeptide.. Functionally, together with its co-chaperonin GroES, plays an essential role in assisting protein folding. The GroEL-GroES system forms a nano-cage that allows encapsulation of the non-native substrate proteins and provides a physical environment optimized to promote and accelerate protein folding. The sequence is that of Chaperonin GroEL from Solibacter usitatus (strain Ellin6076).